A 396-amino-acid polypeptide reads, in one-letter code: 2,3-diketo-5-methylthiopentyl-1-phosphate enolase (396 aa).

Lys85 (proton acceptor) is an active-site residue. Substrate is bound by residues Lys134, 160–163 (KDDE), His251, Gly323, and 345–346 (GG). Positions 160, 162, and 163 each coordinate Mg(2+). Lys160 carries the post-translational modification N6-carboxylysine.

It belongs to the RuBisCO large chain family. Type IV subfamily. In terms of assembly, homodimer. The cofactor is Mg(2+).

The catalysed reaction is 5-methylsulfanyl-2,3-dioxopentyl phosphate = 2-hydroxy-5-methylsulfanyl-3-oxopent-1-enyl phosphate. It participates in amino-acid biosynthesis; L-methionine biosynthesis via salvage pathway; L-methionine from S-methyl-5-thio-alpha-D-ribose 1-phosphate: step 3/6. Catalyzes the enolization of 2,3-diketo-5-methylthiopentyl-1-phosphate (DK-MTP-1-P) into 2-hydroxy-3-keto-5-methylthiopentenyl-1-phosphate (HK-MTPenyl-1-P). This Exiguobacterium sibiricum (strain DSM 17290 / CCUG 55495 / CIP 109462 / JCM 13490 / 255-15) protein is 2,3-diketo-5-methylthiopentyl-1-phosphate enolase.